A 377-amino-acid chain; its full sequence is Guanine nucleotide-binding protein subunit alpha-13 (377 aa).

S-palmitoyl cysteine attachment occurs at residues Cys14 and Cys18. One can recognise a G-alpha domain in the interval 47–377 (RLVKILLLGA…HDNLKQLMLQ (331 aa)). The G1 motif stretch occupies residues 50–63 (KILLLGAGESGKST). Residues 58-63 (ESGKST), Ser173, and 197-200 (LLAR) contribute to the GTP site. A Mg(2+)-binding site is contributed by Ser62. The segment at 195–203 (DILLARRPT) is G2 motif. Mg(2+) is bound at residue Thr203. At Thr203 the chain carries Phosphothreonine; by PKA. Positions 218–227 (FKMVDVGGQR) are G3 motif. Residues 287-294 (ILFLNKTD) are G4 motif. Residues 291 to 294 (NKTD) and Ala349 each bind GTP. Positions 347-352 (TTAINT) are G5 motif.

It belongs to the G-alpha family. G(12) subfamily. In terms of assembly, g proteins are composed of 3 units; alpha, beta and gamma. The alpha chain contains the guanine nucleotide binding site. Interacts with UBXD5. Interacts with HAX1. Interacts (in GTP-bound form) with PPP5C (via TPR repeats); activates PPP5C phosphatase activity and translocates PPP5C to the cell membrane. Interacts with RGS22. Interacts (in GTP-bound form) with ARHGEF1. Interacts (in GTP-bound form) with ARHGEF11 (via RGS domain). Interacts (in GTP-bound form) with ARHGEF12 (via RGS domain). Interacts with CTNND1. Interacts with GASL2L2. Interacts with GPR35. Interacts with GPR174. Post-translationally, palmitoylation is critical for proper membrane localization and signaling. In terms of processing, phosphorylation on Thr-203 by PKA destabilizes the heterotrimer of alpha, beta and gamma, and inhibits Rho activation. As to expression, expressed in testis, including in Leydig cells and in the seminiferous epithelium, in differentiating cells from the spermatogonia to mature spermatozoa stages and round spermatids (at protein level). Expressed in 99.2% of spermatozoa from healthy individuals, but only in 28.6% of macrocephalic spermatozoa from infertile patients (at protein level).

The protein localises to the cell membrane. Its subcellular location is the melanosome. It is found in the cytoplasm. It localises to the nucleus. Guanine nucleotide-binding proteins (G proteins) are involved as modulators or transducers in various transmembrane signaling systems. Activates effector molecule RhoA by binding and activating RhoGEFs (ARHGEF1/p115RhoGEF, ARHGEF11/PDZ-RhoGEF and ARHGEF12/LARG). GNA13-dependent Rho signaling subsequently regulates transcription factor AP-1 (activating protein-1). Promotes tumor cell invasion and metastasis by activating RhoA/ROCK signaling pathway. Inhibits CDH1-mediated cell adhesion in a process independent from Rho activation. In lymphoid follicles, transmits P2RY8- and S1PR2-dependent signals that lead to inhibition of germinal center (GC) B cell growth and migration outside the GC niche. The sequence is that of Guanine nucleotide-binding protein subunit alpha-13 (GNA13) from Homo sapiens (Human).